Consider the following 895-residue polypeptide: MSTQNIDISDLKYNIDVNDIEIIDPFIGENKTDDQKYSNPFFLDHNGSEQKFTKTNILADEYKYVYILCLCDDFELNESNINRVNLFFEKDSVVSELTSQTNSITLVQCPFEIIKIASIRSGVVVVNKDVLEYFNHDSVDLLSRELVYLMLQTKESNVRNWIKMYKSDNNLNKFIQQKIFSSYYGINDERFDHEMIKSLGEINDFRFWENPSNCEININEAFKSRRLNINSSSKWNIPESEIEKFLFDFKNVSGSFKSHKYPPGPPDNSSSNTSGQQNTSNTSNTKFKKFKQVFYKIVDANDMLIDKQDVEDLLISNCLSEREKYYLVCLLLSSKNYCHYILNNHKVITSISDIISKYKPIIRYLMGFAWMSLYLEERVKRSKSIESDRFVFDLENASKPPVFPYNPQNPYTNPYFVMTVSSDLLNLSNNVSGVKQSLEYQSGIVDITEFKKRLNLFISGSHEKDILEGANWNNMVITGGSMTAILPRRNPLHALFTKESKADITYEELNRFYQEYYSNSDIDVACNHENIIDFIENVKHIQTIIAKNLGVKDSEIKTDDIKTLAIYINPKLLQSKCSSGEIPYDYDYILKNKDAREIKFYFHELYIEKKKLSNNKNKKILGSRINDNNYFNIIRYCEIEKVTIIINDYSYESDQVDYKIPEQNSGLETVFYLKDNDTIFIKFSETIKYKIHSRHLKHQFEVFRITDKEFFSCIGRFHLPCVRSYYNGTTCYLLPSAITAYMTFTNMDFKYFIGSHDPLNIINKYRLRGYGTILNENELKYYVKYIHVIDKVKKSFNLKDTDNAEKTLGCLDVTNDFFKPKKFIPEEFPLGLESPSYKDNPDITYITEDTISKLYKQNYPKYLADFNQYTTILPNGNIGPLKRWLIDAAYDLLNN.

The disordered stretch occupies residues 257–283; it reads KSHKYPPGPPDNSSSNTSGQQNTSNTS. Residues 268–283 are compositionally biased toward low complexity; the sequence is NSSSNTSGQQNTSNTS.

This is an uncharacterized protein from Acanthamoeba polyphaga mimivirus (APMV).